The chain runs to 154 residues: SsrA-binding protein (154 aa).

The tract at residues 134 to 154 is disordered; it reads KRQAIKERQTQREIQRELKER.

Belongs to the SmpB family.

The protein resides in the cytoplasm. Functionally, required for rescue of stalled ribosomes mediated by trans-translation. Binds to transfer-messenger RNA (tmRNA), required for stable association of tmRNA with ribosomes. tmRNA and SmpB together mimic tRNA shape, replacing the anticodon stem-loop with SmpB. tmRNA is encoded by the ssrA gene; the 2 termini fold to resemble tRNA(Ala) and it encodes a 'tag peptide', a short internal open reading frame. During trans-translation Ala-aminoacylated tmRNA acts like a tRNA, entering the A-site of stalled ribosomes, displacing the stalled mRNA. The ribosome then switches to translate the ORF on the tmRNA; the nascent peptide is terminated with the 'tag peptide' encoded by the tmRNA and targeted for degradation. The ribosome is freed to recommence translation, which seems to be the essential function of trans-translation. The chain is SsrA-binding protein from Synechococcus sp. (strain JA-2-3B'a(2-13)) (Cyanobacteria bacterium Yellowstone B-Prime).